The sequence spans 344 residues: Selenide, water dikinase (344 aa).

Cys-15 is a catalytic residue. ATP is bound by residues Lys-18 and 46–48 (TKD). Position 49 (Asp-49) interacts with Mg(2+). Residues Asp-66, Asp-89, and 137-139 (GHS) contribute to the ATP site. Asp-89 is a Mg(2+) binding site. Asp-225 is a Mg(2+) binding site.

This sequence belongs to the selenophosphate synthase 1 family. Class I subfamily. Homodimer. Mg(2+) is required as a cofactor.

The enzyme catalyses hydrogenselenide + ATP + H2O = selenophosphate + AMP + phosphate + 2 H(+). Synthesizes selenophosphate from selenide and ATP. The polypeptide is Selenide, water dikinase (Colwellia psychrerythraea (strain 34H / ATCC BAA-681) (Vibrio psychroerythus)).